Here is a 172-residue protein sequence, read N- to C-terminus: Translation initiation factor IF-3 (172 aa).

The protein belongs to the IF-3 family. As to quaternary structure, monomer.

The protein localises to the cytoplasm. Its function is as follows. IF-3 binds to the 30S ribosomal subunit and shifts the equilibrium between 70S ribosomes and their 50S and 30S subunits in favor of the free subunits, thus enhancing the availability of 30S subunits on which protein synthesis initiation begins. The sequence is that of Translation initiation factor IF-3 from Haemophilus influenzae (strain ATCC 51907 / DSM 11121 / KW20 / Rd).